The following is a 479-amino-acid chain: MKVLHVCSELYPLLKTGGLADVMGALPFAQNEIGIDARLVLPAYPAISRGIPNTVVVAEFNNFAGHVVLRYGEYNGIGVYLIDAPHLYAREGNPYHDMWYNDYTDNYKRFALLAWVGAELATGLDFWWRAEIVHAHDWHAGLTAAYLHHKGRPAKSVFTIHNLAYQGRFLPYHLTEIGLPWWMFNVDGLELYGEMSYLKAGLYYSDISTAVSPTYAKEITTPEFAYGLQGLLQTLKAQGRLVGILNGVDEKIWHPYSDPYIEDHYKLKSMQGKRKNKIKLQAYFNLPQNPNALLFVMVTRLTEQKGVDLLIGSAERIVQQGGQLAILGSGSAHLEAGINWLAQEYPENIAVKIGYDEALSHLMIAGGDVILVPSRFEPCGLTQLYGLKYGTLPLVRSTGGLADTVIDSSSENIKARHATGFVFNDADVGGLCYGIDSAFTLWRKPSQWESVIVNAMEQDFSWQTSAKGYQSLYDILLHK.

An ADP-alpha-D-glucose-binding site is contributed by lysine 15.

Belongs to the glycosyltransferase 1 family. Bacterial/plant glycogen synthase subfamily.

The catalysed reaction is [(1-&gt;4)-alpha-D-glucosyl](n) + ADP-alpha-D-glucose = [(1-&gt;4)-alpha-D-glucosyl](n+1) + ADP + H(+). It functions in the pathway glycan biosynthesis; glycogen biosynthesis. Its function is as follows. Synthesizes alpha-1,4-glucan chains using ADP-glucose. This is Glycogen synthase from Histophilus somni (strain 129Pt) (Haemophilus somnus).